The sequence spans 328 residues: DNA-directed RNA polymerase subunit alpha 2 (328 aa).

The tract at residues 1–234 (MQGSVIEFLK…EQLDAFVDLR (234 aa)) is alpha N-terminal domain (alpha-NTD). Residues 248 to 328 (FDPILLRPVD…NWPPASLSED (81 aa)) are alpha C-terminal domain (alpha-CTD).

This sequence belongs to the RNA polymerase alpha chain family. Homodimer. The RNAP catalytic core consists of 2 alpha, 1 beta, 1 beta' and 1 omega subunit. When a sigma factor is associated with the core the holoenzyme is formed, which can initiate transcription.

The catalysed reaction is RNA(n) + a ribonucleoside 5'-triphosphate = RNA(n+1) + diphosphate. Functionally, DNA-dependent RNA polymerase catalyzes the transcription of DNA into RNA using the four ribonucleoside triphosphates as substrates. This chain is DNA-directed RNA polymerase subunit alpha 2, found in Psychromonas ingrahamii (strain DSM 17664 / CCUG 51855 / 37).